Consider the following 432-residue polypeptide: Type I restriction enzyme MjaIX specificity subunit (432 aa).

This sequence belongs to the type-I restriction system S methylase family. As to quaternary structure, the type I restriction/modification system is composed of three polypeptides R, M and S.

The specificity (S) subunit of a type I restriction enzyme; this subunit dictates DNA sequence specificity. The M and S subunits together form a methyltransferase (MTase) that methylates A-3 on the top and A-2 on the bottom strand of the sequence 5'-CCAN(5)GTR-3'. In the presence of the R subunit the complex can also act as an endonuclease, binding to the same target sequence but cutting the DNA some distance from this site. Whether the DNA is cut or modified depends on the methylation state of the target sequence. When the target site is unmodified, the DNA is cut. When the target site is hemimethylated, the complex acts as a maintenance MTase modifying the DNA so that both strands become methylated. After locating a non-methylated recognition site, the enzyme complex serves as a molecular motor that translocates DNA in an ATP-dependent manner until a collision occurs that triggers cleavage. This chain is Type I restriction enzyme MjaIX specificity subunit (hsdS), found in Methanocaldococcus jannaschii (strain ATCC 43067 / DSM 2661 / JAL-1 / JCM 10045 / NBRC 100440) (Methanococcus jannaschii).